The following is a 146-amino-acid chain: NADH-quinone oxidoreductase subunit A (146 aa).

The next 3 helical transmembrane spans lie at 14–34, 68–88, and 96–116; these read FALF…GGFL, LVAM…AWAV, and IGFI…IYLV.

Belongs to the complex I subunit 3 family. As to quaternary structure, NDH-1 is composed of 13 different subunits. Subunits NuoA, H, J, K, L, M, N constitute the membrane sector of the complex.

The protein localises to the cell inner membrane. It catalyses the reaction a quinone + NADH + 5 H(+)(in) = a quinol + NAD(+) + 4 H(+)(out). NDH-1 shuttles electrons from NADH, via FMN and iron-sulfur (Fe-S) centers, to quinones in the respiratory chain. The immediate electron acceptor for the enzyme in this species is believed to be ubiquinone. Couples the redox reaction to proton translocation (for every two electrons transferred, four hydrogen ions are translocated across the cytoplasmic membrane), and thus conserves the redox energy in a proton gradient. The sequence is that of NADH-quinone oxidoreductase subunit A from Pectobacterium atrosepticum (strain SCRI 1043 / ATCC BAA-672) (Erwinia carotovora subsp. atroseptica).